The chain runs to 128 residues: Large ribosomal subunit protein bL20c (128 aa).

The protein belongs to the bacterial ribosomal protein bL20 family.

It is found in the plastid. Its subcellular location is the chloroplast. Its function is as follows. Binds directly to 23S ribosomal RNA and is necessary for the in vitro assembly process of the 50S ribosomal subunit. It is not involved in the protein synthesizing functions of that subunit. The polypeptide is Large ribosomal subunit protein bL20c (Daucus carota (Wild carrot)).